A 125-amino-acid polypeptide reads, in one-letter code: Glucose-1-phosphate adenylyltransferase small subunit (125 aa).

Belongs to the bacterial/plant glucose-1-phosphate adenylyltransferase family. In terms of assembly, heterotetramer. In terms of tissue distribution, leaves.

The protein resides in the plastid. It localises to the chloroplast. The protein localises to the amyloplast. It carries out the reaction alpha-D-glucose 1-phosphate + ATP + H(+) = ADP-alpha-D-glucose + diphosphate. It participates in glycan biosynthesis; starch biosynthesis. Activated by 3'phosphoglycerate, inhibited by orthophosphate. Allosteric regulation. This protein plays a role in synthesis of starch. It catalyzes the synthesis of the activated glycosyl donor, ADP-glucose from Glc-1-P and ATP. This Zea mays (Maize) protein is Glucose-1-phosphate adenylyltransferase small subunit (GLG1).